Here is a 102-residue protein sequence, read N- to C-terminus: Putative peripheral benzodiazepine receptor-related protein (102 aa).

As to expression, ubiquitous.

In Homo sapiens (Human), this protein is Putative peripheral benzodiazepine receptor-related protein (TSPO).